Consider the following 106-residue polypeptide: Glutaredoxin-1 (106 aa).

An N-acetylalanine modification is found at Ala2. Positions 3–106 (QEFVNCKIQP…TRLKQIGALQ (104 aa)) constitute a Glutaredoxin domain. Lys9 carries the N6-succinyllysine modification. 2 cysteine pairs are disulfide-bonded: Cys23–Cys26 and Cys79–Cys83.

The protein belongs to the glutaredoxin family.

It is found in the cytoplasm. Functionally, has a glutathione-disulfide oxidoreductase activity in the presence of NADPH and glutathione reductase. Reduces low molecular weight disulfides and proteins. This Homo sapiens (Human) protein is Glutaredoxin-1 (GLRX).